Here is a 338-residue protein sequence, read N- to C-terminus: Protein pelota homolog (338 aa).

This sequence belongs to the eukaryotic release factor 1 family. Pelota subfamily. As to quaternary structure, monomer. A divalent metal cation is required as a cofactor.

The protein localises to the cytoplasm. May function in recognizing stalled ribosomes, interact with stem-loop structures in stalled mRNA molecules, and effect endonucleolytic cleavage of the mRNA. May play a role in the release non-functional ribosomes and degradation of damaged mRNAs. Has endoribonuclease activity. This Caldivirga maquilingensis (strain ATCC 700844 / DSM 13496 / JCM 10307 / IC-167) protein is Protein pelota homolog.